Reading from the N-terminus, the 326-residue chain is Cathepsin L-like proteinase (326 aa).

Positions 1-15 (MRLFILAVLTVGVLG) are cleaved as a signal peptide. Positions 16–106 (SNDDLWHQWK…HGVPYEANNR (91 aa)) are cleaved as a propeptide — activation peptide. Pro-109 is subject to 3-hydroxyproline; partial. 3 disulfides stabilise this stretch: Cys-129–Cys-172, Cys-163–Cys-204, and Cys-262–Cys-311. Cys-132 is an active-site residue. The residue at position 196 (Pro-196) is a 3-hydroxyproline; partial. Residues His-269 and Asn-289 contribute to the active site.

Belongs to the peptidase C1 family. As to quaternary structure, monomer. Post-translationally, contains cysteine residues involved in intramolecular disulfide bonding.

The protein resides in the secreted. With respect to regulation, strongly inhibited by Antipain, E64 and Leupeptin, and weakly inhibited by iodoacetic acid (IAA) and phenylmethylsulfonyl fluoride (PMSF). Requires the presence of dithiothreitol (DTT) for activity. Its function is as follows. Thiol protease. Probably involved in interaction with host tissues. Displays a similar activity to that of papain. Has high activity on Z-Phe-Arg-NHMec, but no activity on Z-Arg-NHMec. This is Cathepsin L-like proteinase from Fasciola hepatica (Liver fluke).